A 267-amino-acid chain; its full sequence is Phosphoinositide-3-kinase-interacting protein 1 (267 aa).

The N-terminal stretch at Met1–Gly21 is a signal peptide. Over Ser22–Thr172 the chain is Extracellular. One can recognise a Kringle domain in the interval Gly24 to Cys101. Disulfide bonds link Cys25-Cys101, Cys46-Cys82, and Cys70-Cys96. Basic and acidic residues predominate over residues Pro91–Cys101. Positions Pro91–Glu122 are disordered. A helical transmembrane segment spans residues Leu173–Val193. The Cytoplasmic portion of the chain corresponds to Leu194–Ala267.

Its subcellular location is the cell membrane. Functionally, negative regulator of hepatic phosphatidylinositol 3-kinase (PI3K) activity. The sequence is that of Phosphoinositide-3-kinase-interacting protein 1 (Pik3ip1) from Rattus norvegicus (Rat).